The following is a 197-amino-acid chain: Imidazoleglycerol-phosphate dehydratase (197 aa).

The protein belongs to the imidazoleglycerol-phosphate dehydratase family.

The protein localises to the cytoplasm. It catalyses the reaction D-erythro-1-(imidazol-4-yl)glycerol 3-phosphate = 3-(imidazol-4-yl)-2-oxopropyl phosphate + H2O. Its pathway is amino-acid biosynthesis; L-histidine biosynthesis; L-histidine from 5-phospho-alpha-D-ribose 1-diphosphate: step 6/9. This Thioalkalivibrio sulfidiphilus (strain HL-EbGR7) protein is Imidazoleglycerol-phosphate dehydratase.